The sequence spans 782 residues: Zinc finger and SCAN domain-containing protein 10 (782 aa).

A disordered region spans residues 1-37; that stretch reads MLAEPVPDALEQEHPGAVKLEEDEVGEEDPRLAESRP. One can recognise an SCAN box domain in the interval 1–71; sequence MLAEPVPDAL…GRLRELCNHW (71 aa). 2 stretches are compositionally biased toward basic and acidic residues: residues 11 to 20 and 28 to 37; these read EQEHPGAVKL and EDPRLAESRP. 2 positions are modified to phosphoserine: Ser160 and Ser206. Disordered regions lie at residues 197 to 233 and 290 to 321; these read LAPSSNWPMSPEPQEILQDPRESNPSQGPSWLEENSR and SQTEKPEVAGEPLTQTVGQETSSTGWGGTPAD. 14 C2H2-type zinc fingers span residues 292-315, 321-343, 349-371, 377-399, 421-443, 467-489, 495-517, 523-545, 551-573, 579-601, 607-629, 635-657, 669-691, and 697-719; these read TEKPEVAGEPLTQTVGQETSSTGW, DGSEVVKVRGASDAPEPQGEMQF, GVNFPEMSHLQAHQLQSHPNLQP, SFRCLWCGKTFGRSSILKLHMRT, LTKHLLTHSSEPAFRCAECNQGF, EGKTKVPEMAAVLCSHCGQTFKR, RHLRNHAKDKDHLSSEDPGSLSS, PYVCSDCGKAFRQSEQLMIHTRR, RPFSCQVCGRCFTQNSQLISHQQ, KPHACPQCSKRFVRRAGLARHLL, RPYHCAQCGKSFRQMRDLTRHVR, KPCRCNECGEGFTQNAHLARHQR, ICGHRFRNSSNLARHRRSHTGER, and TCGRSFRRNAHLQRHLITHTGSK. Positions 302–313 are enriched in polar residues; sequence LTQTVGQETSST. N5-methylglutamine is present on Gln485. Positions 491–522 are disordered; it reads SSLKRHLRNHAKDKDHLSSEDPGSLSSSQESN. The segment covering 500 to 509 has biased composition (basic and acidic residues); the sequence is HAKDKDHLSS. The span at 510–521 shows a compositional bias: low complexity; it reads EDPGSLSSSQES.

In terms of assembly, interacts with POU5F1/OCT4 and SOX2. Post-translationally, methylated at Gln-485 by N6AMT1. As to expression, embryonic stem (ES) cell-specific. Not expressed in adult, except in testis.

It localises to the nucleus. Functionally, embryonic stem (ES) cell-specific transcription factor required to maintain ES cell pluripotency. Can both activate and /or repress expression of target genes, depending on the context. Specifically binds the 5'-[GA]CGCNNGCG[CT]-3' DNA consensus sequence. Regulates expression of POU5F1/OCT4, ZSCAN4 and ALYREF/THOC4. This Mus musculus (Mouse) protein is Zinc finger and SCAN domain-containing protein 10 (Zscan10).